The following is a 204-amino-acid chain: Large ribosomal subunit protein uL4 (204 aa).

The tract at residues 47–69 is disordered; sequence KAQKTRAEVSGGGKKPWRQKGTG.

The protein belongs to the universal ribosomal protein uL4 family. In terms of assembly, part of the 50S ribosomal subunit.

One of the primary rRNA binding proteins, this protein initially binds near the 5'-end of the 23S rRNA. It is important during the early stages of 50S assembly. It makes multiple contacts with different domains of the 23S rRNA in the assembled 50S subunit and ribosome. Its function is as follows. Forms part of the polypeptide exit tunnel. This is Large ribosomal subunit protein uL4 from Cellvibrio japonicus (strain Ueda107) (Pseudomonas fluorescens subsp. cellulosa).